The following is a 331-amino-acid chain: MKVGINGFGRIGRQVFRILHSRGVEVALINDLTDNKTLAHLLKYDSIYHRFPGEVAYDDQYLYVDGKAIRATAVKDPKEIPWAEAGVGVVIESTGVFTDADKAKAHLEGGAKKVIITAPAKGEDITIVMGVNHEAYDPSRHHIISNASCTTNSLAPVMKVLEEAFGVEKALMTTVHSYTNDQRLLDLPHKDLRRARAAAINIIPTTTGAAKATALVLPSLKGRFDGMALRVPTATGSISDITALLKREVTAEEVNAALKAAAEGPLKGILAYTEDEIVLQDIVMDPHSSIVDAKLTKALGNMVKVFAWYDNEWGYANRVADLVELVLRKGV.

NAD(+)-binding positions include 10–11 (RI), aspartate 31, lysine 75, and threonine 117. D-glyceraldehyde 3-phosphate-binding positions include 148-150 (SCT) and threonine 179. The active-site Nucleophile is the cysteine 149. Asparagine 180 serves as a coordination point for NAD(+). D-glyceraldehyde 3-phosphate contacts are provided by residues arginine 194, 207–208 (TG), and arginine 230. Asparagine 311 contacts NAD(+).

The protein belongs to the glyceraldehyde-3-phosphate dehydrogenase family. In terms of assembly, homotetramer.

The protein localises to the cytoplasm. The catalysed reaction is D-glyceraldehyde 3-phosphate + phosphate + NAD(+) = (2R)-3-phospho-glyceroyl phosphate + NADH + H(+). It functions in the pathway carbohydrate degradation; glycolysis; pyruvate from D-glyceraldehyde 3-phosphate: step 1/5. Its function is as follows. Catalyzes the oxidative phosphorylation of glyceraldehyde 3-phosphate (G3P) to 1,3-bisphosphoglycerate (BPG) using the cofactor NAD. The first reaction step involves the formation of a hemiacetal intermediate between G3P and a cysteine residue, and this hemiacetal intermediate is then oxidized to a thioester, with concomitant reduction of NAD to NADH. The reduced NADH is then exchanged with the second NAD, and the thioester is attacked by a nucleophilic inorganic phosphate to produce BPG. The sequence is that of Glyceraldehyde-3-phosphate dehydrogenase (gap) from Thermus aquaticus.